The primary structure comprises 513 residues: Histidine ammonia-lyase (513 aa).

Residues 143–145 (ASG) constitute a cross-link (5-imidazolinone (Ala-Gly)). The residue at position 144 (Ser-144) is a 2,3-didehydroalanine (Ser).

Belongs to the PAL/histidase family. Post-translationally, contains an active site 4-methylidene-imidazol-5-one (MIO), which is formed autocatalytically by cyclization and dehydration of residues Ala-Ser-Gly.

The protein localises to the cytoplasm. It catalyses the reaction L-histidine = trans-urocanate + NH4(+). The protein operates within amino-acid degradation; L-histidine degradation into L-glutamate; N-formimidoyl-L-glutamate from L-histidine: step 1/3. This chain is Histidine ammonia-lyase, found in Paracoccus denitrificans (strain Pd 1222).